A 486-amino-acid chain; its full sequence is PTS system N-acetylmuramic acid-specific EIIBC component (486 aa).

The region spanning 1–89 (MAKITQTMIS…NKLIESVING (89 aa)) is the PTS EIIB type-1 domain. Cysteine 28 functions as the Phosphocysteine intermediate; for EIIB activity in the catalytic mechanism. In terms of domain architecture, PTS EIIC type-1 spans 127–486 (SKFATIFTPL…FFGSKDVDLS (360 aa)). The next 10 helical transmembrane spans lie at 129–149 (FATI…LLGF), 170–190 (LIAY…ILIG), 196–216 (AFGG…LGYN), 230–250 (FFGY…AAII), 268–288 (MILT…VVIM), 312–332 (AAIL…QGFV), 347–367 (LFPI…ALYF), 381–401 (GAII…VTLP), 411–431 (IGGA…LPVG), and 453–473 (IFAG…VGFL).

The protein resides in the cell inner membrane. It catalyses the reaction N-acetyl-beta-D-muramate(out) + N(pros)-phospho-L-histidyl-[protein] = N-acetyl-beta-D-muramate 6-phosphate(in) + L-histidyl-[protein]. In terms of biological role, the phosphoenolpyruvate-dependent sugar phosphotransferase system (sugar PTS), a major carbohydrate active transport system, catalyzes the phosphorylation of incoming sugar substrates concomitantly with their translocation across the cell membrane. This system is involved in N-acetylmuramic acid (MurNAc) transport, yielding cytoplasmic MurNAc-6-P. Is also able to take up anhydro-N-acetylmuramic acid (anhMurNAc), but cannot phosphorylate the carbon 6, probably because of the 1,6-anhydro ring. The protein is PTS system N-acetylmuramic acid-specific EIIBC component (murP) of Vibrio vulnificus (strain CMCP6).